The sequence spans 394 residues: Elongation factor Tu (394 aa).

Positions lysine 10–glutamate 204 constitute a tr-type G domain. Positions glycine 19 to threonine 26 are G1. Glycine 19–threonine 26 lines the GTP pocket. Position 26 (threonine 26) interacts with Mg(2+). Positions glycine 60–asparagine 64 are G2. The G3 stretch occupies residues aspartate 81–glycine 84. Residues aspartate 81–histidine 85 and asparagine 136–aspartate 139 contribute to the GTP site. The G4 stretch occupies residues asparagine 136–aspartate 139. The segment at serine 174–leucine 176 is G5.

The protein belongs to the TRAFAC class translation factor GTPase superfamily. Classic translation factor GTPase family. EF-Tu/EF-1A subfamily. In terms of assembly, monomer.

Its subcellular location is the cytoplasm. The enzyme catalyses GTP + H2O = GDP + phosphate + H(+). Functionally, GTP hydrolase that promotes the GTP-dependent binding of aminoacyl-tRNA to the A-site of ribosomes during protein biosynthesis. The polypeptide is Elongation factor Tu (Chlamydia felis (strain Fe/C-56) (Chlamydophila felis)).